The following is a 1183-amino-acid chain: Spermatogenesis-associated protein 31G1 (1183 aa).

Disordered regions lie at residues threonine 109–phenylalanine 153, leucine 469–alanine 555, threonine 661–proline 686, alanine 843–valine 884, cysteine 973–leucine 1032, and glutamine 1048–alanine 1087. The segment covering cysteine 124 to glutamate 134 has biased composition (basic and acidic residues). A compositionally biased stretch (polar residues) spans threonine 135–phenylalanine 153. A compositionally biased stretch (basic and acidic residues) spans asparagine 487 to histidine 509. A compositionally biased stretch (polar residues) spans threonine 671 to glutamate 685. Pro residues predominate over residues proline 847 to threonine 858. A compositionally biased stretch (polar residues) spans histidine 975–alanine 984. Residues glutamine 993–alanine 1002 show a composition bias toward basic residues. A compositionally biased stretch (polar residues) spans serine 1069–alanine 1079.

In terms of tissue distribution, expressed in kidney and testis. Expressed at lower levels in stomach, intestine, epididymis and ovary. Expressed at very low levels in heart and spleen.

Its function is as follows. Dispensable for normal development and fertility. This Mus musculus (Mouse) protein is Spermatogenesis-associated protein 31G1 (Spata31g1).